Here is a 151-residue protein sequence, read N- to C-terminus: Flagellar assembly factor FliW (151 aa).

It belongs to the FliW family. As to quaternary structure, interacts with translational regulator CsrA and flagellin(s).

It is found in the cytoplasm. Functionally, acts as an anti-CsrA protein, binds CsrA and prevents it from repressing translation of its target genes, one of which is flagellin. Binds to flagellin and participates in the assembly of the flagellum. This is Flagellar assembly factor FliW from Natranaerobius thermophilus (strain ATCC BAA-1301 / DSM 18059 / JW/NM-WN-LF).